Consider the following 143-residue polypeptide: Large ribosomal subunit protein uL11 (143 aa).

It belongs to the universal ribosomal protein uL11 family. In terms of assembly, part of the ribosomal stalk of the 50S ribosomal subunit. Interacts with L10 and the large rRNA to form the base of the stalk. L10 forms an elongated spine to which L12 dimers bind in a sequential fashion forming a multimeric L10(L12)X complex. One or more lysine residues are methylated.

In terms of biological role, forms part of the ribosomal stalk which helps the ribosome interact with GTP-bound translation factors. This Polynucleobacter asymbioticus (strain DSM 18221 / CIP 109841 / QLW-P1DMWA-1) (Polynucleobacter necessarius subsp. asymbioticus) protein is Large ribosomal subunit protein uL11.